A 194-amino-acid chain; its full sequence is Protein GrpE (194 aa).

It belongs to the GrpE family. In terms of assembly, homodimer.

It localises to the cytoplasm. Functionally, participates actively in the response to hyperosmotic and heat shock by preventing the aggregation of stress-denatured proteins, in association with DnaK and GrpE. It is the nucleotide exchange factor for DnaK and may function as a thermosensor. Unfolded proteins bind initially to DnaJ; upon interaction with the DnaJ-bound protein, DnaK hydrolyzes its bound ATP, resulting in the formation of a stable complex. GrpE releases ADP from DnaK; ATP binding to DnaK triggers the release of the substrate protein, thus completing the reaction cycle. Several rounds of ATP-dependent interactions between DnaJ, DnaK and GrpE are required for fully efficient folding. The polypeptide is Protein GrpE (Aliivibrio fischeri (strain ATCC 700601 / ES114) (Vibrio fischeri)).